The chain runs to 542 residues: CTP synthase (542 aa).

Residues 1-265 (MARYIFITGG…DSEVLCAFGI (265 aa)) are amidoligase domain. CTP is bound at residue serine 13. Serine 13 contacts UTP. Position 14-19 (14-19 (SLGKGI)) interacts with ATP. Tyrosine 54 is a binding site for L-glutamine. ATP is bound at residue aspartate 71. Mg(2+)-binding residues include aspartate 71 and glutamate 139. CTP-binding positions include 146-148 (DIE), 186-191 (KTKPTQ), and lysine 222. UTP is bound by residues 186-191 (KTKPTQ) and lysine 222. A Glutamine amidotransferase type-1 domain is found at 291–541 (TIAVVGKYTG…IEATVEQSRL (251 aa)). Residue alanine 353 participates in L-glutamine binding. The active-site Nucleophile; for glutamine hydrolysis is the cysteine 380. Residues 381-384 (FGMQ), glutamate 404, and arginine 469 contribute to the L-glutamine site. Catalysis depends on residues histidine 514 and glutamate 516.

This sequence belongs to the CTP synthase family. In terms of assembly, homotetramer.

It carries out the reaction UTP + L-glutamine + ATP + H2O = CTP + L-glutamate + ADP + phosphate + 2 H(+). It catalyses the reaction L-glutamine + H2O = L-glutamate + NH4(+). The catalysed reaction is UTP + NH4(+) + ATP = CTP + ADP + phosphate + 2 H(+). It functions in the pathway pyrimidine metabolism; CTP biosynthesis via de novo pathway; CTP from UDP: step 2/2. Its activity is regulated as follows. Allosterically activated by GTP, when glutamine is the substrate; GTP has no effect on the reaction when ammonia is the substrate. The allosteric effector GTP functions by stabilizing the protein conformation that binds the tetrahedral intermediate(s) formed during glutamine hydrolysis. Inhibited by the product CTP, via allosteric rather than competitive inhibition. In terms of biological role, catalyzes the ATP-dependent amination of UTP to CTP with either L-glutamine or ammonia as the source of nitrogen. Regulates intracellular CTP levels through interactions with the four ribonucleotide triphosphates. The protein is CTP synthase of Bartonella quintana (strain Toulouse) (Rochalimaea quintana).